The primary structure comprises 545 residues: Chaperonin GroEL 2 (545 aa).

ATP is bound by residues 29–32, 86–90, Gly413, 479–481, and Asp495; these read TLGP, DGTTT, and NAA.

Belongs to the chaperonin (HSP60) family. In terms of assembly, forms a cylinder of 14 subunits composed of two heptameric rings stacked back-to-back. Interacts with the co-chaperonin GroES.

It is found in the cytoplasm. It carries out the reaction ATP + H2O + a folded polypeptide = ADP + phosphate + an unfolded polypeptide.. Together with its co-chaperonin GroES, plays an essential role in assisting protein folding. The GroEL-GroES system forms a nano-cage that allows encapsulation of the non-native substrate proteins and provides a physical environment optimized to promote and accelerate protein folding. This Prochlorococcus marinus (strain SARG / CCMP1375 / SS120) protein is Chaperonin GroEL 2.